We begin with the raw amino-acid sequence, 70 residues long: Small ribosomal subunit protein bS21 (70 aa).

This sequence belongs to the bacterial ribosomal protein bS21 family.

This Bordetella avium (strain 197N) protein is Small ribosomal subunit protein bS21.